A 516-amino-acid polypeptide reads, in one-letter code: TBC1 domain family member 22A (516 aa).

At alanine 2 the chain carries N-acetylalanine. Disordered stretches follow at residues 63–88 (EFES…ATES) and 102–186 (LRNH…ALAD). The span at 107 to 116 (QRQSQPSQKT) shows a compositional bias: polar residues. Over residues 122-133 (EPQPIAEPPVPP) the composition is skewed to pro residues. The segment covering 143 to 179 (VSESHTPCPSESTGDTVPLQRSQSLPHSATVTLSGTS) has biased composition (polar residues). Phosphoserine is present on residues serine 144 and serine 166. A Rab-GAP TBC domain is found at 221–445 (GIPKPVRPMT…RLWDTYQSEP (225 aa)).

Homodimer. Interacts with ACBD3 and ARFGEF1. Interacts with YWHAB, YWHAE, YWHAG, YWHAH, YWHAQ and YWHAZ.

Functionally, may act as a GTPase-activating protein for Rab family protein(s). This is TBC1 domain family member 22A (Tbc1d22a) from Mus musculus (Mouse).